A 273-amino-acid chain; its full sequence is Serine acetyltransferase (273 aa).

This sequence belongs to the transferase hexapeptide repeat family. Part of the cysteine synthase complex formed at a ratio of 1 copy of this protein and 2 copies of O-acetylserine sulfhydrylase (cysK). The complex reversibly dissociates in the presence of O-acetyl-L-serine in the absence of hydrogen sulfide.

It is found in the cytoplasm. It carries out the reaction L-serine + acetyl-CoA = O-acetyl-L-serine + CoA. The protein operates within amino-acid biosynthesis; L-cysteine biosynthesis; L-cysteine from L-serine: step 1/2. With respect to regulation, sensitive to feedback inhibition by L-cysteine. In Salmonella typhimurium (strain LT2 / SGSC1412 / ATCC 700720), this protein is Serine acetyltransferase (cysE).